The sequence spans 205 residues: Protein phosphatase inhibitor 2 family member C (205 aa).

Disordered regions lie at residues 1 to 51 (MSAS…DESS) and 70 to 114 (EPGT…DHSC). A required for binding PPP1CC region spans residues 12–17 (KGILKN). The segment covering 19–34 (SSSGSSVATSGQQSGG) has biased composition (low complexity). Residues 43 to 55 (KSQKWDESSILAT) form a required for binding PPP1CC region. Residues 84–102 (DSVRDVEGEDSVRGVEGKE) show a composition bias toward basic and acidic residues. The interval 147 to 150 (HYNE) is required for binding PPP1CC catalytic center, displacing metal ions and inhibition of PPP1CC catalytic activity. Residues 165 to 205 (LQSEDDENEERPQATNEEKTAAEESEEAPLSGGLQTQSCDP) are disordered. Basic and acidic residues predominate over residues 174–186 (ERPQATNEEKTAA).

Belongs to the protein phosphatase inhibitor 2 family.

In terms of biological role, functions as a protein phosphatase inhibitor. It inhibits activity of the catalytic subunit of PP1 and weakly inhibits the activity of myosin-associated phosphates. In Macaca fascicularis (Crab-eating macaque), this protein is Protein phosphatase inhibitor 2 family member C (PPP1R2C).